A 427-amino-acid chain; its full sequence is Gamma-glutamyl phosphate reductase (427 aa).

This sequence belongs to the gamma-glutamyl phosphate reductase family.

Its subcellular location is the cytoplasm. It carries out the reaction L-glutamate 5-semialdehyde + phosphate + NADP(+) = L-glutamyl 5-phosphate + NADPH + H(+). It participates in amino-acid biosynthesis; L-proline biosynthesis; L-glutamate 5-semialdehyde from L-glutamate: step 2/2. In terms of biological role, catalyzes the NADPH-dependent reduction of L-glutamate 5-phosphate into L-glutamate 5-semialdehyde and phosphate. The product spontaneously undergoes cyclization to form 1-pyrroline-5-carboxylate. The protein is Gamma-glutamyl phosphate reductase of Anaeromyxobacter dehalogenans (strain 2CP-1 / ATCC BAA-258).